The primary structure comprises 79 residues: Large ribosomal subunit protein bL28 (79 aa).

It belongs to the bacterial ribosomal protein bL28 family.

This is Large ribosomal subunit protein bL28 from Christiangramia forsetii (strain DSM 17595 / CGMCC 1.15422 / KT0803) (Gramella forsetii).